The chain runs to 613 residues: Dihydroxy-acid dehydratase (613 aa).

Aspartate 81 lines the Mg(2+) pocket. Residue cysteine 122 participates in [2Fe-2S] cluster binding. Mg(2+) is bound by residues aspartate 123 and lysine 124. Lysine 124 carries the N6-carboxylysine modification. Cysteine 193 contributes to the [2Fe-2S] cluster binding site. Residue glutamate 489 participates in Mg(2+) binding. Serine 515 serves as the catalytic Proton acceptor.

This sequence belongs to the IlvD/Edd family. In terms of assembly, homodimer. The cofactor is [2Fe-2S] cluster. Requires Mg(2+) as cofactor.

It catalyses the reaction (2R)-2,3-dihydroxy-3-methylbutanoate = 3-methyl-2-oxobutanoate + H2O. The catalysed reaction is (2R,3R)-2,3-dihydroxy-3-methylpentanoate = (S)-3-methyl-2-oxopentanoate + H2O. The protein operates within amino-acid biosynthesis; L-isoleucine biosynthesis; L-isoleucine from 2-oxobutanoate: step 3/4. It participates in amino-acid biosynthesis; L-valine biosynthesis; L-valine from pyruvate: step 3/4. Functionally, functions in the biosynthesis of branched-chain amino acids. Catalyzes the dehydration of (2R,3R)-2,3-dihydroxy-3-methylpentanoate (2,3-dihydroxy-3-methylvalerate) into 2-oxo-3-methylpentanoate (2-oxo-3-methylvalerate) and of (2R)-2,3-dihydroxy-3-methylbutanoate (2,3-dihydroxyisovalerate) into 2-oxo-3-methylbutanoate (2-oxoisovalerate), the penultimate precursor to L-isoleucine and L-valine, respectively. The chain is Dihydroxy-acid dehydratase from Pseudomonas fluorescens (strain Pf0-1).